The primary structure comprises 932 residues: Protocadherin gamma-A9 (932 aa).

Residues 1-28 (MAAPTKCQLRGRLVLLCSLLGMLWEARA) form the signal peptide. 6 consecutive Cadherin domains span residues 29–133 (SQIR…APKF), 134–242 (QAES…APVF), 243–347 (AQRI…RPEV), 348–452 (TITS…PPAF), 453–562 (SQAS…APEI), and 570–683 (DGST…IPAD). Topologically, residues 29-692 (SQIRYSVPEE…DLEASDLTLY (664 aa)) are extracellular. 2 N-linked (GlcNAc...) asparagine glycosylation sites follow: asparagine 47 and asparagine 127. Asparagine 389, asparagine 419, and asparagine 545 each carry an N-linked (GlcNAc...) asparagine glycan. Residues 693-713 (LVVAVAVVSCVFLTFVITLLA) form a helical membrane-spanning segment. Over 714–932 (LRLRHWHSSH…KKKSGKKEKK (219 aa)) the chain is Cytoplasmic. 2 disordered regions span residues 803 to 841 (DTPL…WPNN) and 902 to 932 (ATLT…KEKK). Over residues 816–841 (WRFSQAQRPGTSGSQNGDDTGTWPNN) the composition is skewed to polar residues. A compositionally biased stretch (basic residues) spans 922 to 932 (NKKKSGKKEKK).

Its subcellular location is the cell membrane. In terms of biological role, potential calcium-dependent cell-adhesion protein. May be involved in the establishment and maintenance of specific neuronal connections in the brain. The polypeptide is Protocadherin gamma-A9 (PCDHGA9) (Homo sapiens (Human)).